We begin with the raw amino-acid sequence, 981 residues long: Serine/threonine-protein kinase D1044.8 (981 aa).

Positions 453 to 725 (YELLDQLGAG…MCGVRLLEYL (273 aa)) constitute a Protein kinase domain. Residues 459-467 (LGAGAFGCV) and lysine 488 contribute to the ATP site. The Proton acceptor role is filled by aspartate 591. Positions 735-746 (TSDMTASQSSYN) are enriched in polar residues. Disordered regions lie at residues 735–802 (TSDM…PSSI) and 823–847 (IPSR…TELK). Residues 752–762 (SPSSLNSSTSS) show a composition bias toward low complexity. Positions 830–847 (QTCSTEHPARSSSSTELK) are enriched in polar residues.

It belongs to the protein kinase superfamily. NEK Ser/Thr protein kinase family. NIMA subfamily. It depends on Mg(2+) as a cofactor.

It catalyses the reaction L-seryl-[protein] + ATP = O-phospho-L-seryl-[protein] + ADP + H(+). The catalysed reaction is L-threonyl-[protein] + ATP = O-phospho-L-threonyl-[protein] + ADP + H(+). The protein is Serine/threonine-protein kinase D1044.8 (nekl-4) of Caenorhabditis elegans.